The sequence spans 511 residues: 2-isopropylmalate synthase (511 aa).

The Pyruvate carboxyltransferase domain maps to 5–267; the sequence is LIIFDTTLRD…DTDINATHIL (263 aa). Residues Asp14, His202, His204, and Asn238 each coordinate Mn(2+). The tract at residues 392-511 is regulatory domain; sequence KLVSLKVCTE…ATNKAQHPQI (120 aa).

Belongs to the alpha-IPM synthase/homocitrate synthase family. LeuA type 1 subfamily. Homodimer. Mn(2+) is required as a cofactor.

It is found in the cytoplasm. It catalyses the reaction 3-methyl-2-oxobutanoate + acetyl-CoA + H2O = (2S)-2-isopropylmalate + CoA + H(+). Its pathway is amino-acid biosynthesis; L-leucine biosynthesis; L-leucine from 3-methyl-2-oxobutanoate: step 1/4. In terms of biological role, catalyzes the condensation of the acetyl group of acetyl-CoA with 3-methyl-2-oxobutanoate (2-ketoisovalerate) to form 3-carboxy-3-hydroxy-4-methylpentanoate (2-isopropylmalate). This Ruthia magnifica subsp. Calyptogena magnifica protein is 2-isopropylmalate synthase.